The following is a 253-amino-acid chain: MRQLFVAGNWKMHGDKASIKTLVTGLNAKADSVGDVLVAVCPPAIYLDYTKNCLMAGEIALGGQNMAIEPVQGAYTGETSASMLKDVGCQYVILGHSERRAIYGETDQDIAAKVKTALDSGLTPILCVGETLEERESGQLESVISQQLDAVISEVGIDQFADVVIAYEPVWAIGTGKTASAQQAQDVHAFIRGQLAKLNPSVAEKVIIQYGGSVKPNNASELFSQPDIDGGLIGGASLNADDFIAICQAAGEQ.

Residue 9 to 11 coordinates substrate; it reads NWK. The Electrophile role is filled by histidine 96. The active-site Proton acceptor is the glutamate 168. Substrate contacts are provided by residues glycine 174, serine 213, and 234–235; that span reads GG.

It belongs to the triosephosphate isomerase family. In terms of assembly, homodimer.

It is found in the cytoplasm. It carries out the reaction D-glyceraldehyde 3-phosphate = dihydroxyacetone phosphate. It participates in carbohydrate biosynthesis; gluconeogenesis. It functions in the pathway carbohydrate degradation; glycolysis; D-glyceraldehyde 3-phosphate from glycerone phosphate: step 1/1. Involved in the gluconeogenesis. Catalyzes stereospecifically the conversion of dihydroxyacetone phosphate (DHAP) to D-glyceraldehyde-3-phosphate (G3P). This is Triosephosphate isomerase from Hydrogenovibrio crunogenus (strain DSM 25203 / XCL-2) (Thiomicrospira crunogena).